A 145-amino-acid polypeptide reads, in one-letter code: Protoporphyrinogen IX oxidase (145 aa).

4 consecutive transmembrane segments (helical) span residues 6–26 (LWFK…LLYL), 61–81 (AMIS…FVAL), 83–103 (TWFQ…GLLA), and 123–143 (IVNE…IVKP). His-12 contacts heme. Lys-88 is a heme binding site.

This sequence belongs to the HemJ family. In terms of assembly, homodimer. It depends on heme b as a cofactor.

The protein resides in the cell membrane. The enzyme catalyses protoporphyrinogen IX + 3 A = protoporphyrin IX + 3 AH2. It participates in porphyrin-containing compound metabolism; protoporphyrin-IX biosynthesis; protoporphyrin-IX from protoporphyrinogen-IX: step 1/1. Its function is as follows. Catalyzes the oxidation of protoporphyrinogen IX to protoporphyrin IX. Is involved in the biosynthesis of tetrapyrrole molecules like heme. Does not use oxygen or artificial electron acceptors such as menadione or benzoquinone. The sequence is that of Protoporphyrinogen IX oxidase from Rickettsia prowazekii (strain Madrid E).